The sequence spans 379 residues: uncharacterized protein (379 aa).

3 disordered regions span residues 1 to 20 (MLPQ…PVGP), 227 to 290 (VSQR…LQGH), and 331 to 371 (PGCA…RAGH). Positions 7-20 (QVVHGVQDGPPVGP) are enriched in low complexity. A compositionally biased stretch (basic and acidic residues) spans 249–261 (GCKDPRVRKEPGR).

This is an uncharacterized protein from Dryophytes versicolor (chameleon treefrog).